The chain runs to 89 residues: Dynein light chain 2, cytoplasmic (89 aa).

It belongs to the dynein light chain family. In terms of assembly, homodimer. The cytoplasmic dynein 1 complex consists of two catalytic heavy chains (HCs) and a number of non-catalytic subunits which present intermediate chains (ICs), light intermediate chains (LICs) and light chains (LCs); the composition seems to vary in respect to the IC, LIC and LC composition. The heavy chain homodimer serves as a scaffold for the probable homodimeric assembly of the respective non-catalytic subunits. Dynein ICs and LICs bind directly to the HC dimer and the LCs assemble on the IC dimer. Interacts with DYNC1I1. Interacts with BMF. Component of the myosin V motor complex. Interacts with BCAS1. Interacts with Basson/BSN. Interacts with AMBRA1 (via TQT motifs); tethering AMBRA1 to the cytoskeleton. Interacts with IQUB.

The protein localises to the cytoplasm. Its subcellular location is the cytoskeleton. Its function is as follows. Acts as one of several non-catalytic accessory components of the cytoplasmic dynein 1 complex that are thought to be involved in linking dynein to cargos and to adapter proteins that regulate dynein function. Cytoplasmic dynein 1 acts as a motor for the intracellular retrograde motility of vesicles and organelles along microtubules. May play a role in changing or maintaining the spatial distribution of cytoskeletal structures. The sequence is that of Dynein light chain 2, cytoplasmic (DYNLL2) from Homo sapiens (Human).